Here is a 287-residue protein sequence, read N- to C-terminus: 4-hydroxybenzoate octaprenyltransferase (287 aa).

Helical transmembrane passes span 21-41 (VGIFLLLWPTLWAVWIAAKGA), 44-64 (FKIAVIFIAGSVVMRAAGCIV), 91-111 (VTEAMLLFAVLSLIAFTLVLL), 112-132 (LNRLTVELAVIGILLALVYPF), 139-159 (LPQLWLGVAFSWSIPMAFAAT), 160-180 (VGHVPAVAWLLFFAAVLWPIV), 211-231 (LMIGLLQGSVLLTFGLLGWYL), 235-255 (YWFYLGLLVALGLMCYQQFLI), and 263-283 (CFAAFRNNNWVGFFIFLGILL).

It belongs to the UbiA prenyltransferase family. Mg(2+) is required as a cofactor.

The protein localises to the cell inner membrane. The catalysed reaction is all-trans-octaprenyl diphosphate + 4-hydroxybenzoate = 4-hydroxy-3-(all-trans-octaprenyl)benzoate + diphosphate. It participates in cofactor biosynthesis; ubiquinone biosynthesis. Functionally, catalyzes the prenylation of para-hydroxybenzoate (PHB) with an all-trans polyprenyl group. Mediates the second step in the final reaction sequence of ubiquinone-8 (UQ-8) biosynthesis, which is the condensation of the polyisoprenoid side chain with PHB, generating the first membrane-bound Q intermediate 3-octaprenyl-4-hydroxybenzoate. The polypeptide is 4-hydroxybenzoate octaprenyltransferase (Coxiella burnetii (strain CbuG_Q212) (Coxiella burnetii (strain Q212))).